The sequence spans 76 residues: Small ribosomal subunit protein bS21A (76 aa).

The span at His35 to Arg52 shows a compositional bias: basic and acidic residues. Positions His35–Arg76 are disordered. The span at Arg53–Ala62 shows a compositional bias: basic residues.

Belongs to the bacterial ribosomal protein bS21 family.

The chain is Small ribosomal subunit protein bS21A from Chelativorans sp. (strain BNC1).